The sequence spans 239 residues: Urease accessory protein UreE (239 aa).

The disordered stretch occupies residues 185–239 (VASPLDEPHGSGLHIHGIHSHGDGHSHSHDSHSHSHDSDHGHSHSHGDHDHDHKH). Residues 204 to 239 (SHGDGHSHSHDSHSHSHDSDHGHSHSHGDHDHDHKH) show a composition bias toward basic and acidic residues.

Belongs to the UreE family.

The protein resides in the cytoplasm. Functionally, involved in urease metallocenter assembly. Binds nickel. Probably functions as a nickel donor during metallocenter assembly. The sequence is that of Urease accessory protein UreE from Yersinia frederiksenii.